The following is a 220-amino-acid chain: Protein US2 homolog (220 aa).

The protein belongs to the herpesviridae US2 family.

The protein is Protein US2 homolog of Bovine herpesvirus 1.2 (strain ST) (BoHV-1).